The chain runs to 131 residues: Small ribosomal subunit protein uS8 (131 aa).

This sequence belongs to the universal ribosomal protein uS8 family. As to quaternary structure, part of the 30S ribosomal subunit. Contacts proteins S5 and S12.

Functionally, one of the primary rRNA binding proteins, it binds directly to 16S rRNA central domain where it helps coordinate assembly of the platform of the 30S subunit. This is Small ribosomal subunit protein uS8 from Dictyoglomus thermophilum (strain ATCC 35947 / DSM 3960 / H-6-12).